Reading from the N-terminus, the 196-residue chain is Dephospho-CoA kinase (196 aa).

The 194-residue stretch at 3 to 196 (RIGLTGNIGC…KVYEELTRDP (194 aa)) folds into the DPCK domain. Position 11 to 16 (11 to 16 (GCGKST)) interacts with ATP.

This sequence belongs to the CoaE family.

It is found in the cytoplasm. It catalyses the reaction 3'-dephospho-CoA + ATP = ADP + CoA + H(+). Its pathway is cofactor biosynthesis; coenzyme A biosynthesis; CoA from (R)-pantothenate: step 5/5. Functionally, catalyzes the phosphorylation of the 3'-hydroxyl group of dephosphocoenzyme A to form coenzyme A. The protein is Dephospho-CoA kinase of Aquifex aeolicus (strain VF5).